A 470-amino-acid polypeptide reads, in one-letter code: Neuraminidase (470 aa).

The Intravirion segment spans residues 1–14 (MNPNQKIITIGSAS). Residues 11–32 (GSASLGILILNVILHVVSIIVT) are involved in apical transport and lipid raft association. Residues 15-35 (LGILILNVILHVVSIIVTVLV) form a helical membrane-spanning segment. The tract at residues 32-86 (TVLVLNNNGTGLNCNGTIIREYNETVRVERVIQWYNTNTIEYIERPSNEYYMNNT) is hypervariable stalk region. Topologically, residues 36–470 (LNNNGTGLNC…AILPFDIDKM (435 aa)) are virion surface. Asn39, Asn46, Asn54, and Asn84 each carry an N-linked (GlcNAc...) asparagine; by host glycan. Residues 89-470 (LCEAQGFAPF…AILPFDIDKM (382 aa)) form a head of neuraminidase region. 8 cysteine pairs are disulfide-bonded: Cys90/Cys417, Cys122/Cys127, Cys182/Cys229, Cys231/Cys236, Cys277/Cys290, Cys279/Cys288, Cys316/Cys335, and Cys421/Cys446. Arg116 lines the substrate pocket. N-linked (GlcNAc...) asparagine; by host glycosylation occurs at Asn144. The Proton donor/acceptor role is filled by Asp149. Arg150 serves as a coordination point for substrate. 275–276 (EE) provides a ligand contact to substrate. Arg291 is a substrate binding site. A Ca(2+)-binding site is contributed by Asp292. Residue Asn293 is glycosylated (N-linked (GlcNAc...) asparagine; by host). The Ca(2+) site is built by Gly296 and Asp322. Arg368 provides a ligand contact to substrate. N-linked (GlcNAc...) asparagine; by host glycosylation is present at Asn398. Tyr402 serves as the catalytic Nucleophile.

It belongs to the glycosyl hydrolase 34 family. Homotetramer. Requires Ca(2+) as cofactor. N-glycosylated.

It is found in the virion membrane. Its subcellular location is the host apical cell membrane. The enzyme catalyses Hydrolysis of alpha-(2-&gt;3)-, alpha-(2-&gt;6)-, alpha-(2-&gt;8)- glycosidic linkages of terminal sialic acid residues in oligosaccharides, glycoproteins, glycolipids, colominic acid and synthetic substrates.. Its activity is regulated as follows. Inhibited by the neuraminidase inhibitors zanamivir (Relenza) and oseltamivir (Tamiflu). These drugs interfere with the release of progeny virus from infected cells and are effective against all influenza strains. Resistance to neuraminidase inhibitors is quite rare. Its function is as follows. Catalyzes the removal of terminal sialic acid residues from viral and cellular glycoconjugates. Cleaves off the terminal sialic acids on the glycosylated HA during virus budding to facilitate virus release. Additionally helps virus spread through the circulation by further removing sialic acids from the cell surface. These cleavages prevent self-aggregation and ensure the efficient spread of the progeny virus from cell to cell. Otherwise, infection would be limited to one round of replication. Described as a receptor-destroying enzyme because it cleaves a terminal sialic acid from the cellular receptors. May facilitate viral invasion of the upper airways by cleaving the sialic acid moieties on the mucin of the airway epithelial cells. Likely to plays a role in the budding process through its association with lipid rafts during intracellular transport. May additionally display a raft-association independent effect on budding. Plays a role in the determination of host range restriction on replication and virulence. Sialidase activity in late endosome/lysosome traffic seems to enhance virus replication. This chain is Neuraminidase, found in Influenza A virus (strain A/Equine/Santiago/1/1985 H3N8).